The primary structure comprises 246 residues: Probable S-methyl-5'-thioinosine phosphorylase (246 aa).

Phosphate contacts are provided by residues Thr-10 and 52-53 (RH). Residue Met-185 coordinates substrate. Thr-186 lines the phosphate pocket. Residue 209-211 (NPA) coordinates substrate.

The protein belongs to the PNP/MTAP phosphorylase family. MTAP subfamily. In terms of assembly, homotrimer.

The catalysed reaction is S-methyl-5'-thioinosine + phosphate = 5-(methylsulfanyl)-alpha-D-ribose 1-phosphate + hypoxanthine. It functions in the pathway purine metabolism; purine nucleoside salvage. Its function is as follows. Catalyzes the reversible phosphorylation of S-methyl-5'-thioinosine (MTI) to hypoxanthine and 5-methylthioribose-1-phosphate. Involved in the breakdown of S-methyl-5'-thioadenosine (MTA), a major by-product of polyamine biosynthesis. Catabolism of (MTA) occurs via deamination to MTI and phosphorolysis to hypoxanthine. The protein is Probable S-methyl-5'-thioinosine phosphorylase of Pseudomonas syringae pv. tomato (strain ATCC BAA-871 / DC3000).